The primary structure comprises 244 residues: Phosphoadenosine 5'-phosphosulfate reductase (244 aa).

Cys-239 functions as the Nucleophile; cysteine thiosulfonate intermediate in the catalytic mechanism.

This sequence belongs to the PAPS reductase family. CysH subfamily.

The protein resides in the cytoplasm. The enzyme catalyses [thioredoxin]-disulfide + sulfite + adenosine 3',5'-bisphosphate + 2 H(+) = [thioredoxin]-dithiol + 3'-phosphoadenylyl sulfate. It functions in the pathway sulfur metabolism; hydrogen sulfide biosynthesis; sulfite from sulfate: step 3/3. Functionally, catalyzes the formation of sulfite from phosphoadenosine 5'-phosphosulfate (PAPS) using thioredoxin as an electron donor. This Photorhabdus laumondii subsp. laumondii (strain DSM 15139 / CIP 105565 / TT01) (Photorhabdus luminescens subsp. laumondii) protein is Phosphoadenosine 5'-phosphosulfate reductase.